A 357-amino-acid chain; its full sequence is MSKQILILPGDGIGPEIMAEAVKVLQRIDTQHGLGFELVYDELGGAAYDKYGSPLADETLERARAADAVLLGAVGGPQWDTIDPSLRPERGLLKIRSQLGLFANLRPALLYPQLADASTLKPEVVAGLDLLILRELTGGIYFGQPRGNRTLDNGERQAYDTLPYSESEICRIAKAGFEMARLRGKKLCSVDKANVLASSQLWRAVVEEVAKDYPDIALSHMYVDNAAMQLVRAPKQFDVIVTDNMFGDILSDQASMLTGSIGMLPSASLDANSKGMYEPCHGSAPDIAGKGIANPLATILSVAMMLRYTFAQADAADAIERAVGKVLDQGLRTADIWSEGTTKVGTVAMGDAVVAAL.

76 to 89 (GPQWDTIDPSLRPE) is a binding site for NAD(+). Positions 96, 106, 134, and 224 each coordinate substrate. Mg(2+) contacts are provided by aspartate 224, aspartate 248, and aspartate 252. 282-294 (GSAPDIAGKGIAN) contacts NAD(+).

Belongs to the isocitrate and isopropylmalate dehydrogenases family. LeuB type 1 subfamily. In terms of assembly, homodimer. Mg(2+) serves as cofactor. The cofactor is Mn(2+).

Its subcellular location is the cytoplasm. It catalyses the reaction (2R,3S)-3-isopropylmalate + NAD(+) = 4-methyl-2-oxopentanoate + CO2 + NADH. It participates in amino-acid biosynthesis; L-leucine biosynthesis; L-leucine from 3-methyl-2-oxobutanoate: step 3/4. Its function is as follows. Catalyzes the oxidation of 3-carboxy-2-hydroxy-4-methylpentanoate (3-isopropylmalate) to 3-carboxy-4-methyl-2-oxopentanoate. The product decarboxylates to 4-methyl-2 oxopentanoate. This is 3-isopropylmalate dehydrogenase from Xanthomonas oryzae pv. oryzae (strain MAFF 311018).